The chain runs to 349 residues: 3'-5' exoribonuclease 1 (349 aa).

2 stretches are compositionally biased toward basic and acidic residues: residues 1-10 (MEDPQSKEPA) and 22-35 (PRPE…RPSP). The interval 1 to 48 (MEDPQSKEPAGEAVALALLESPRPEGGEEPPRPSPEETQQCKFDGQET) is disordered. A phosphoserine mark is found at Ser-59 and Ser-62. Residues 76–110 (INRMSKEELRAKLSEFKLETRGVKDVLKKRLKNYY) enclose the SAP domain. Residues 130-306 (ICIIDFEATC…DDSKNIARIA (177 aa)) enclose the Exonuclease domain. Positions 134 and 136 each coordinate Mg(2+). Glu-136 acts as the Proton acceptor in catalysis. Residues Glu-136 and Ala-137 each contribute to the AMP site. Position 234 (Asp-234) interacts with Mg(2+). The active-site Proton acceptor is His-293. Residue His-293 coordinates AMP. A Mg(2+)-binding site is contributed by Asp-298.

As to quaternary structure, identified in a histone pre-mRNA complex, at least composed of ERI1, LSM11, SLBP, SNRPB, SYNCRIP and YBX1. Interacts in a cooperative manner with SLBP to the mature 3'-end of histone mRNAs. Binds to 40S and 60S ribosomal subunits and to 80S assembled ribosomes. Found in a ternary complex with SLBP and the stem-loop structure of the 3'-end of histone mRNAs. Requires Mg(2+) as cofactor.

Its subcellular location is the cytoplasm. The protein localises to the nucleus. It is found in the nucleolus. The catalysed reaction is Exonucleolytic cleavage in the 3'- to 5'-direction to yield nucleoside 5'-phosphates.. With respect to regulation, although it can bind simultaneously with SLBP to the 3'-end of histone mRNA, the presence of SLBP prevents the exonuclease activity. Functionally, RNA exonuclease that binds to the 3'-end of histone mRNAs and degrades them, suggesting that it plays an essential role in histone mRNA decay after replication. A 2' and 3'-hydroxyl groups at the last nucleotide of the histone 3'-end is required for efficient 3'-end histone mRNA exonuclease activity and degradation of RNA substrates. Also able to degrade the 3'-overhangs of short interfering RNAs (siRNAs) in vitro, suggesting a possible role as regulator of RNA interference (RNAi). Required for binding the 5'-ACCCA-3' sequence present in stem-loop structure. Able to bind other mRNAs. Required for 5.8S rRNA 3'-end processing. Also binds to 5.8s ribosomal RNA. Binds with high affinity to the stem-loop structure of replication-dependent histone pre-mRNAs. In vitro, does not have sequence specificity. In vitro, has weak DNA exonuclease activity. In vitro, shows biphasic kinetics such that there is rapid hydrolysis of the last three unpaired RNA nucleotides in the 39 flanking sequence followed by a much slower cleavage through the stem that occurs over a longer incubation period in the order of hours. ERI1-mediated RNA metabolism plays a key role in chondrogenesis. This Homo sapiens (Human) protein is 3'-5' exoribonuclease 1.